Reading from the N-terminus, the 368-residue chain is MIRVYTQRQQGKNWLQRYQGYKPIFGCILGFTDTGLIPGISAAGATPQDRQYTCLADIEFLYNGLQLQPQYPLPPLEAGASPVLITKAIIDTLNIPLYLFNAGLYHKPTVPTIDLGGAPARCLTSGHALDLATIQHLLEVGSYWGRKLADEAKDSYVILGECVVGGTTTALAVLLGLGIGAIGKVNSSHPQCNHDQKLAVVHQGLQEAGFHSALPVSEPLKLVAAVGDPMQIVVAGMGMAASLKVGVMLAGGTQMLAVYALMQVLAEKLSLLWRPENIVVGTTRWVAEDPTGDTVGLAQEIGCVPLMATQLHFDESCYPQLQAYERGYVKEGVGCGGCAITAHLYRNWNQTQLLKAVEDLFASFIFLE.

Belongs to the UPF0284 family.

In Trichodesmium erythraeum (strain IMS101), this protein is UPF0284 protein Tery_1555.